The primary structure comprises 394 residues: uncharacterized protein (394 aa).

A run of 11 helical transmembrane segments spans residues 10 to 30 (PALIVLMSIATGLAVASNYYA), 50 to 70 (FIVTAAQLGYAAGLLFLVPLG), 79 to 99 (IVSMTLLAAGGMLITASSQSL), 100 to 120 (AMMILGTALTGLFSVVAQILV), 138 to 158 (TIMSGLLLGILLARTVAGLLA), 166 to 186 (VFWVASVLMALMALALWRGLP), 218 to 238 (LLGCLTFANFSILWTSMAFLL), 243 to 263 (FNYSDGVIGLFGLAGAAGALG), 291 to 311 (WLAIWFGHTSVLALIIGILVL), 337 to 357 (LTAGYMTSYFIGGAAGSLISA), and 364 to 384 (GWAGVCLAGATIALVNLLVWW).

This sequence belongs to the major facilitator superfamily.

The protein resides in the cell inner membrane. This is an uncharacterized protein from Escherichia coli (strain K12).